We begin with the raw amino-acid sequence, 123 residues long: Probable U6 snRNA-associated Sm-like protein LSm4 (123 aa).

In terms of domain architecture, Sm spans 3 to 76 (LPLSLLKTAQ…IKYLRIPETV (74 aa)). Residues 85–97 (NEVRRQQQREQSR) are compositionally biased toward basic and acidic residues. The disordered stretch occupies residues 85 to 123 (NEVRRQQQREQSRGRGGGRGGRGGHRGGGGNRGGRGGAR). A compositionally biased stretch (gly residues) spans 98-123 (GRGGGRGGRGGHRGGGGNRGGRGGAR).

It belongs to the snRNP Sm proteins family. In terms of assembly, component of the precatalytic spliceosome (spliceosome B complex). Component of the U4/U6-U5 tri-snRNP complex, a building block of the precatalytic spliceosome (spliceosome B complex). LSM2, LSM3, LSM4, LSM5, LSM6, LSM7 and LSM8 form a heptameric, ring-shaped subcomplex (the LSM2-8 complex) that is part of the U4/U6-U5 tri-snRNP complex and the precatalytic spliceosome.

It localises to the nucleus. Functionally, plays a role in pre-mRNA splicing as component of the U4/U6-U5 tri-snRNP complex that is involved in spliceosome assembly, and as component of the precatalytic spliceosome (spliceosome B complex). The heptameric LSM2-8 complex binds specifically to the 3'-terminal U-tract of U6 snRNA. The sequence is that of Probable U6 snRNA-associated Sm-like protein LSm4 (lsm-4) from Caenorhabditis elegans.